Here is a 507-residue protein sequence, read N- to C-terminus: Chromosomal replication initiator protein DnaA (507 aa).

Residues 1-112 (MTDDPGSGFT…PATDEADDTT (112 aa)) form a domain I, interacts with DnaA modulators region. The disordered stretch occupies residues 99–162 (RIAPPATDEA…ERPRNTDSAT (64 aa)). Over residues 113 to 127 (VPPSENPATTSPDTT) the composition is skewed to polar residues. The domain II stretch occupies residues 113 to 166 (VPPSENPATTSPDTTTDNDEIDDSAAARGDNQHSWPSYFTERPRNTDSATAGVT). The segment at 167-383 (SLNRRYTFDT…GALIRVTAFA (217 aa)) is domain III, AAA+ region. 4 residues coordinate ATP: Gly211, Gly213, Lys214, and Thr215. Residues 384 to 507 (SLNKTPIDKA…TTRIRQRSKR (124 aa)) are domain IV, binds dsDNA.

It belongs to the DnaA family. As to quaternary structure, oligomerizes as a right-handed, spiral filament on DNA at oriC.

The protein resides in the cytoplasm. Its function is as follows. Plays an essential role in the initiation and regulation of chromosomal replication. ATP-DnaA binds to the origin of replication (oriC) to initiate formation of the DNA replication initiation complex once per cell cycle. Binds the DnaA box (a 9 base pair repeat at the origin) and separates the double-stranded (ds)DNA. Forms a right-handed helical filament on oriC DNA; dsDNA binds to the exterior of the filament while single-stranded (ss)DNA is stabiized in the filament's interior. The ATP-DnaA-oriC complex binds and stabilizes one strand of the AT-rich DNA unwinding element (DUE), permitting loading of DNA polymerase. After initiation quickly degrades to an ADP-DnaA complex that is not apt for DNA replication. Binds acidic phospholipids. The chain is Chromosomal replication initiator protein DnaA from Mycobacterium bovis (strain BCG / Tokyo 172 / ATCC 35737 / TMC 1019).